The following is a 198-amino-acid chain: Large ribosomal subunit protein bL9 (198 aa).

The segment covering 156-166 (RGEDISTRQED) has biased composition (basic and acidic residues). Residues 156–198 (RGEDISTRQEDQDAAAEALAAAGEFFDPEAHNDGEQEEEAGDK) form a disordered region.

Belongs to the bacterial ribosomal protein bL9 family.

In terms of biological role, binds to the 23S rRNA. This Rhodopseudomonas palustris (strain BisB18) protein is Large ribosomal subunit protein bL9.